A 113-amino-acid chain; its full sequence is UPF0122 protein MGAS10270_Spy1030 (113 aa).

It belongs to the UPF0122 family.

Functionally, might take part in the signal recognition particle (SRP) pathway. This is inferred from the conservation of its genetic proximity to ftsY/ffh. May be a regulatory protein. The polypeptide is UPF0122 protein MGAS10270_Spy1030 (Streptococcus pyogenes serotype M2 (strain MGAS10270)).